We begin with the raw amino-acid sequence, 355 residues long: UDP-N-acetylglucosamine--N-acetylmuramyl-(pentapeptide) pyrophosphoryl-undecaprenol N-acetylglucosamine transferase (355 aa).

Residues 11-13, Asn120, Arg161, Ser188, and Gln280 each bind UDP-N-acetyl-alpha-D-glucosamine; that span reads TGG.

It belongs to the glycosyltransferase 28 family. MurG subfamily.

The protein localises to the cell inner membrane. It carries out the reaction di-trans,octa-cis-undecaprenyl diphospho-N-acetyl-alpha-D-muramoyl-L-alanyl-D-glutamyl-meso-2,6-diaminopimeloyl-D-alanyl-D-alanine + UDP-N-acetyl-alpha-D-glucosamine = di-trans,octa-cis-undecaprenyl diphospho-[N-acetyl-alpha-D-glucosaminyl-(1-&gt;4)]-N-acetyl-alpha-D-muramoyl-L-alanyl-D-glutamyl-meso-2,6-diaminopimeloyl-D-alanyl-D-alanine + UDP + H(+). It participates in cell wall biogenesis; peptidoglycan biosynthesis. Cell wall formation. Catalyzes the transfer of a GlcNAc subunit on undecaprenyl-pyrophosphoryl-MurNAc-pentapeptide (lipid intermediate I) to form undecaprenyl-pyrophosphoryl-MurNAc-(pentapeptide)GlcNAc (lipid intermediate II). The polypeptide is UDP-N-acetylglucosamine--N-acetylmuramyl-(pentapeptide) pyrophosphoryl-undecaprenol N-acetylglucosamine transferase (Prochlorococcus marinus (strain MIT 9211)).